A 445-amino-acid polypeptide reads, in one-letter code: UPF0210 protein SSU05_0296 (445 aa).

The protein belongs to the UPF0210 family. As to quaternary structure, homodimer.

The polypeptide is UPF0210 protein SSU05_0296 (Streptococcus suis (strain 05ZYH33)).